Consider the following 104-residue polypeptide: Large ribosomal subunit protein bL21 (104 aa).

The protein belongs to the bacterial ribosomal protein bL21 family. Part of the 50S ribosomal subunit. Contacts protein L20.

In terms of biological role, this protein binds to 23S rRNA in the presence of protein L20. This chain is Large ribosomal subunit protein bL21, found in Streptococcus uberis (strain ATCC BAA-854 / 0140J).